A 613-amino-acid polypeptide reads, in one-letter code: Ectonucleoside triphosphate diphosphohydrolase 4 (613 aa).

The Cytoplasmic portion of the chain corresponds to 1 to 33; it reads MGRIGISCLFPASWHFSISPVGCPRILNTNLRQ. A helical transmembrane segment spans residues 34–54; it reads IVVISILAAAVSLLYFSVVII. At 55-559 the chain is on the lumenal side; it reads RSKYGWLSKD…AGHAHWRGVS (505 aa). The Proton acceptor role is filled by glutamate 222. Cysteines 368 and 395 form a disulfide. 2 N-linked (GlcNAc...) asparagine glycosylation sites follow: asparagine 404 and asparagine 407. Cysteines 461 and 490 form a disulfide. The chain crosses the membrane as a helical span at residues 560-580; it reads FVYNHYLFSGCFLVVLLSILL. Topologically, residues 581–613 are cytoplasmic; sequence YLLRLRRIHRRAPRTGSLWMEEGLPSQKGPGPL.

It belongs to the GDA1/CD39 NTPase family. Ca(2+) is required as a cofactor. The cofactor is Mg(2+). As to expression, ubiquitous.

It is found in the cytoplasmic vesicle. Its subcellular location is the autophagosome membrane. It localises to the lysosome membrane. The protein localises to the golgi apparatus membrane. It catalyses the reaction a ribonucleoside 5'-triphosphate + H2O = a ribonucleoside 5'-diphosphate + phosphate + H(+). The catalysed reaction is a ribonucleoside 5'-diphosphate + H2O = a ribonucleoside 5'-phosphate + phosphate + H(+). The enzyme catalyses UDP + H2O = UMP + phosphate + H(+). It carries out the reaction UTP + H2O = UDP + phosphate + H(+). It catalyses the reaction CTP + H2O = CDP + phosphate + H(+). The catalysed reaction is GDP + H2O = GMP + phosphate + H(+). The enzyme catalyses 5-methyl-UTP + H2O = 5-methyl-UDP + phosphate + H(+). Its function is as follows. Catalyzes the hydrolysis of nucleoside triphosphates and diphosphates in a calcium- or magnesium-dependent manner, with a preference for pyrimidines. Preferentially hydrolyzes UTP and TTP on UTP and TTP. AMP, ADP, ATP and UMP are not substrates. Preferentially activated by Ca(2+) over Mg(2+). Functionally, has a broad substrate specificity with the ability of cleaving all nucleotide di- and triphosphates with the exception of adenosine di- and triphosphate (ADP and ATP). Preferentially hydrolyzes CTP, UDP, CDP, GTP and GDP. Can use either Ca(2+) or Mg(2+) equally. The polypeptide is Ectonucleoside triphosphate diphosphohydrolase 4 (Entpd4) (Mus musculus (Mouse)).